We begin with the raw amino-acid sequence, 606 residues long: NADH-ubiquinone oxidoreductase chain 5 (606 aa).

Helical transmembrane passes span 1–21 (MNLF…PIMM), 35–55 (YVKN…MVYL), 87–107 (LMFM…SMWY), 114–134 (INQF…LVTA), 140–160 (LFIG…WWFG), 171–191 (AILY…WFLS), 211–233 (FPLM…HPWL), 241–261 (TPVS…FLLV), 272–292 (LIQT…AICA), 301–320 (IIAF…IGLN), 325–347 (AFLH…GSII), 366–386 (LPFT…MPFL), 413–433 (LIAT…ALLG), 457–477 (LLVG…PMTT), 482–502 (MPLH…IIAF), and 582–602 (GLIK…MILF).

The protein belongs to the complex I subunit 5 family. In terms of assembly, core subunit of respiratory chain NADH dehydrogenase (Complex I) which is composed of 45 different subunits.

The protein localises to the mitochondrion inner membrane. The catalysed reaction is a ubiquinone + NADH + 5 H(+)(in) = a ubiquinol + NAD(+) + 4 H(+)(out). Core subunit of the mitochondrial membrane respiratory chain NADH dehydrogenase (Complex I) which catalyzes electron transfer from NADH through the respiratory chain, using ubiquinone as an electron acceptor. Essential for the catalytic activity and assembly of complex I. The polypeptide is NADH-ubiquinone oxidoreductase chain 5 (MT-ND5) (Balaenoptera physalus (Fin whale)).